A 709-amino-acid polypeptide reads, in one-letter code: Putative extracellular sulfatase Sulf-1 homolog (709 aa).

Residues 1 to 27 form the signal peptide; it reads MISNLRISNYFIIFYVLFLIIPIKVTS. Ca(2+)-binding residues include Asp-43, Asp-44, and Cys-79. Catalysis depends on Cys-79, which acts as the Nucleophile. Cys-79 is subject to 3-oxoalanine (Cys). Asn-103, Asn-162, and Asn-189 each carry an N-linked (GlcNAc...) asparagine glycan. Residues Asp-308 and His-309 each contribute to the Ca(2+) site. 7 N-linked (GlcNAc...) asparagine glycosylation sites follow: Asn-344, Asn-468, Asn-500, Asn-540, Asn-566, Asn-610, and Asn-620.

The protein belongs to the sulfatase family. It depends on Ca(2+) as a cofactor. The conversion to 3-oxoalanine (also known as C-formylglycine, FGly), of a serine or cysteine residue in prokaryotes and of a cysteine residue in eukaryotes, is critical for catalytic activity.

It is found in the endoplasmic reticulum. The protein localises to the golgi apparatus. Its subcellular location is the golgi stack. The protein resides in the cell surface. The polypeptide is Putative extracellular sulfatase Sulf-1 homolog (sul-1) (Caenorhabditis elegans).